We begin with the raw amino-acid sequence, 226 residues long: MNDILIRIARRIKKNIIWIIAVPIILGAAGYILPSQIADQKSYTAEDTLAVGSYDHPVYNSTEEIPLLLKSDSFLKEALPDEKDEDVAEIKEKLTINTESKSLLTLSYSDEDKDRTESVLNAISSTFLKNDQKLYAEREAVIRSSIDALEGESVSEDSKVDKERFLYELKNTQLNLKAASVTDSETVSETAGGGMSPKKKAVLGVMIGLTIAFMFVVIPEFFRESF.

The next 2 helical transmembrane spans lie at 15–35 and 202–222; these read NIIW…ILPS and VLGV…PEFF.

It is found in the cell membrane. It participates in cell wall biogenesis; teichuronic acid biosynthesis. The protein is Teichuronic acid biosynthesis protein TuaF (tuaF) of Bacillus subtilis (strain 168).